Reading from the N-terminus, the 492-residue chain is KAT8 regulatory NSL complex subunit 2 (492 aa).

A Glycyl lysine isopeptide (Lys-Gly) (interchain with G-Cter in SUMO2) cross-link involves residue Lys78. Positions 126 to 182 (ELGSQTPESSRSEASRILDEDSWSDGEQEPITVDQTWRGDPDSEADSIDRDQEDPLK) are disordered. The residue at position 131 (Thr131) is a Phosphothreonine. Positions 135-144 (SRSEASRILD) are enriched in basic and acidic residues. A phosphoserine mark is found at Ser147, Ser149, Ser168, and Ser172. Basic and acidic residues predominate over residues 162-182 (WRGDPDSEADSIDRDQEDPLK). Positions 308–364 (DVRCSNQSLPMTRHCLTHICQDTNRVLFKCCQGSEEVPCNKPVPVSLSEDPCCPLHF) are required for interaction with other NSL complex members. A disordered region spans residues 453-492 (QMAGDGCRSQGPRNSEKAPAPLSQSGIATANGKPEPTSVS).

Component of the NSL complex at least composed of KAT8/MOF, KANSL1, KANSL2, KANSL3, MCRS1, PHF20, OGT1/OGT, WDR5 and HCFC1. Ubiquitously expressed.

It localises to the nucleus. It is found in the mitochondrion. In terms of biological role, non-catalytic component of the NSL histone acetyltransferase complex, a multiprotein complex that mediates histone H4 acetylation at 'Lys-5'- and 'Lys-8' (H4K5ac and H4K8ac) at transcription start sites and promotes transcription initiation. Required for NSL complex stability and for transcription of intraciliary transport genes in both ciliated and non-ciliated cells by regulating histone H4 acetylation at 'Lys-5'- and 'Lys-12' (H4K5ac and H4K12ac). This is necessary for cilium assembly in ciliated cells and for organization of the microtubule cytoskeleton in non-ciliated cells. Required within the NSL complex to maintain nuclear architecture stability by promoting KAT8-mediated acetylation of lamin LMNA. This Capra hircus (Goat) protein is KAT8 regulatory NSL complex subunit 2 (KANSL2).